The following is a 370-amino-acid chain: UDP-N-acetylglucosamine--N-acetylmuramyl-(pentapeptide) pyrophosphoryl-undecaprenol N-acetylglucosamine transferase (370 aa).

Residues 20-22 (TAG), asparagine 134, arginine 170, serine 204, isoleucine 257, and glutamine 301 each bind UDP-N-acetyl-alpha-D-glucosamine.

The protein belongs to the glycosyltransferase 28 family. MurG subfamily.

It localises to the cell membrane. The enzyme catalyses di-trans,octa-cis-undecaprenyl diphospho-N-acetyl-alpha-D-muramoyl-L-alanyl-D-glutamyl-meso-2,6-diaminopimeloyl-D-alanyl-D-alanine + UDP-N-acetyl-alpha-D-glucosamine = di-trans,octa-cis-undecaprenyl diphospho-[N-acetyl-alpha-D-glucosaminyl-(1-&gt;4)]-N-acetyl-alpha-D-muramoyl-L-alanyl-D-glutamyl-meso-2,6-diaminopimeloyl-D-alanyl-D-alanine + UDP + H(+). The protein operates within cell wall biogenesis; peptidoglycan biosynthesis. Functionally, cell wall formation. Catalyzes the transfer of a GlcNAc subunit on undecaprenyl-pyrophosphoryl-MurNAc-pentapeptide (lipid intermediate I) to form undecaprenyl-pyrophosphoryl-MurNAc-(pentapeptide)GlcNAc (lipid intermediate II). This is UDP-N-acetylglucosamine--N-acetylmuramyl-(pentapeptide) pyrophosphoryl-undecaprenol N-acetylglucosamine transferase from Corynebacterium jeikeium (strain K411).